A 177-amino-acid chain; its full sequence is Decaprenylphosphoryl-5-phosphoribose phosphatase (177 aa).

The next 4 membrane-spanning stretches (helical) occupy residues 35-55 (HFGE…IALP), 62-82 (LVAG…KRLV), 124-144 (GLPL…LLGV), and 150-170 (VAVG…VGGG).

It belongs to the PA-phosphatase related phosphoesterase family.

The protein resides in the cell membrane. The enzyme catalyses trans,octa-cis-decaprenylphospho-beta-D-ribofuranose 5-phosphate + H2O = trans,octa-cis-decaprenylphospho-beta-D-ribofuranose + phosphate. It participates in cell wall biogenesis; cell wall polysaccharide biosynthesis. Its function is as follows. Phosphatase involved in the biosynthesis of decaprenylphosphoryl arabinose (DPA), which serves as the arabinose donor for the biosynthesis of arabinogalactan, the major mycobacterial cell wall polysaccharide. Catalyzes the dephosphorylation of decaprenylphosphoryl-5-phosphoribose (DPPR) to decaprenyl-phosphoribose (DPR). The polypeptide is Decaprenylphosphoryl-5-phosphoribose phosphatase (Mycobacterium tuberculosis (strain CDC 1551 / Oshkosh)).